A 78-amino-acid chain; its full sequence is Translational regulator CsrA (78 aa).

Belongs to the CsrA/RsmA family. As to quaternary structure, homodimer; the beta-strands of each monomer intercalate to form a hydrophobic core, while the alpha-helices form wings that extend away from the core.

The protein resides in the cytoplasm. Functionally, a translational regulator that binds mRNA to regulate translation initiation and/or mRNA stability. Usually binds in the 5'-UTR at or near the Shine-Dalgarno sequence preventing ribosome-binding, thus repressing translation. Its main target seems to be the major flagellin gene, while its function is anatagonized by FliW. The chain is Translational regulator CsrA from Geobacter metallireducens (strain ATCC 53774 / DSM 7210 / GS-15).